A 152-amino-acid chain; its full sequence is Ubiquitin-conjugating enzyme E2 2 (152 aa).

Positions 4–150 (PARKRLMRDF…VREVVEQSWT (147 aa)) constitute a UBC core domain. The active-site Glycyl thioester intermediate is Cys88.

Belongs to the ubiquitin-conjugating enzyme family.

The enzyme catalyses S-ubiquitinyl-[E1 ubiquitin-activating enzyme]-L-cysteine + [E2 ubiquitin-conjugating enzyme]-L-cysteine = [E1 ubiquitin-activating enzyme]-L-cysteine + S-ubiquitinyl-[E2 ubiquitin-conjugating enzyme]-L-cysteine.. Its pathway is protein modification; protein ubiquitination. Its function is as follows. Catalyzes the covalent attachment of ubiquitin to other proteins. The protein is Ubiquitin-conjugating enzyme E2 2 (UBC2) of Triticum aestivum (Wheat).